Here is a 79-residue protein sequence, read N- to C-terminus: Small ribosomal subunit protein bS18 (79 aa).

Belongs to the bacterial ribosomal protein bS18 family. As to quaternary structure, part of the 30S ribosomal subunit. Forms a tight heterodimer with protein bS6.

In terms of biological role, binds as a heterodimer with protein bS6 to the central domain of the 16S rRNA, where it helps stabilize the platform of the 30S subunit. This is Small ribosomal subunit protein bS18 from Salinispora arenicola (strain CNS-205).